The sequence spans 151 residues: Large ribosomal subunit protein uL13 (151 aa).

Belongs to the universal ribosomal protein uL13 family. Part of the 50S ribosomal subunit.

Functionally, this protein is one of the early assembly proteins of the 50S ribosomal subunit, although it is not seen to bind rRNA by itself. It is important during the early stages of 50S assembly. This Petrotoga mobilis (strain DSM 10674 / SJ95) protein is Large ribosomal subunit protein uL13.